Consider the following 59-residue polypeptide: Large ribosomal subunit protein bL32 (59 aa).

This sequence belongs to the bacterial ribosomal protein bL32 family.

This Anaeromyxobacter dehalogenans (strain 2CP-C) protein is Large ribosomal subunit protein bL32.